A 298-amino-acid chain; its full sequence is MSSSPSRNPTNAEAPPPPPTSTDAVAEGSSKKVRKPYTITKSRESWTEEEHDKFLEALQLFDRDWKKIEDFVGSKTVIQIRSHAQKYFLKVQKNGTLAHVPPPRPKRKAAHPYPQKASKNAQMPLQVSTSFTTTRNGDMPGYASWDDASMLLNRVISPQHELATLRGAEADIGSKGLLNVSSPSTSGMGSSSRTVSGSEIVRKAKQPPVLHGVPDFAEVYNFIGSVFDPETRGHVEKLKEMDPINFETVLLLMRNLTVNLSNPDLESTRKVLLSYDNVTTELPSVVSLVKNSTSDKSA.

Residues 1 to 44 (MSSSPSRNPTNAEAPPPPPTSTDAVAEGSSKKVRKPYTITKSRE) form a disordered region. One can recognise an HTH myb-type domain in the interval 38–92 (TITKSRESWTEEEHDKFLEALQLFDRDWKKIEDFVGSKTVIQIRSHAQKYFLKVQ). The segment at residues 65-88 (WKKIEDFVGSKTVIQIRSHAQKYF) is a DNA-binding region (H-T-H motif). Residues 96-123 (TLAHVPPPRPKRKAAHPYPQKASKNAQM) are disordered.

It localises to the nucleus. Its function is as follows. Transcriptional activator of evening element (EE)-containing clock-controlled genes. Forms a negative feedback loop with APRR5. Regulates the pattern of histone H3 acetylation of the TOC1 promoter. RVE4, RVE6 and RVE8 are components of the circadian system acting synergistically to regulate flowering time, redundantly to regulate leaf growth, and antagonistically to regulate hypocotyl elongation; their action seems independent of ZTL and HY5. The protein is Protein REVEILLE 8 of Arabidopsis thaliana (Mouse-ear cress).